The sequence spans 200 residues: LexA repressor (200 aa).

Residues Ser121 and Lys158 each act as for autocatalytic cleavage activity in the active site.

This sequence belongs to the peptidase S24 family. Homodimer.

It catalyses the reaction Hydrolysis of Ala-|-Gly bond in repressor LexA.. Functionally, binds a consensus sequence 5'-TGTTC-N(4)-GAACA-3'; some genes have a tandem consensus sequence and their binding is cooperative. Binds to the promoters of a number of genes, including lexA and splB. Represses a number of genes involved in the response to DNA damage (SOS response). The chain is LexA repressor from Opitutus terrae (strain DSM 11246 / JCM 15787 / PB90-1).